A 297-amino-acid polypeptide reads, in one-letter code: Taste receptor type 2 member 4 (297 aa).

At 1–11 (MLWELYVFVFA) the chain is on the extracellular side. A helical membrane pass occupies residues 12 to 32 (ASVFLNFVGIIANLFIIVIII). The Cytoplasmic segment spans residues 33 to 46 (KTWVNSRRIASPDR). A helical transmembrane segment spans residues 47-67 (ILFSLAITRFLTLGLFLLNSV). At 68 to 80 (YIATNTGRSVYFS) the chain is on the extracellular side. Residues 81–101 (TFFLLCWKFLDANSLWLVTIL) form a helical membrane-spanning segment. Over 102 to 128 (NSLYCVKITNFQHPVFLLLKRTISMKT) the chain is Cytoplasmic. Residues 129–149 (TSLLLACLLISALTTLLYYML) traverse the membrane as a helical segment. Topologically, residues 150–171 (SQISRFPEHIIGRNDTSFDLSD) are extracellular. N163 is a glycosylation site (N-linked (GlcNAc...) asparagine). Residues 172–192 (GILTLVASLVLNSLLQFMLNV) traverse the membrane as a helical segment. The Cytoplasmic portion of the chain corresponds to 193-229 (TFASLLIHSLRRHIQKMQRNRTSFWNPQTEAHMGAMR). Residues 230–250 (LMICFLVLYIPYSIATLLYLP) form a helical membrane-spanning segment. The Extracellular portion of the chain corresponds to 251–260 (SYMRKNLRAQ). The helical transmembrane segment at 261-281 (AICMIITAAYPPGHSVLLIIT) threads the bilayer. Residues 282–297 (HHKLKAKAKKIFCFYK) are Cytoplasmic-facing.

This sequence belongs to the G-protein coupled receptor T2R family. In terms of tissue distribution, expressed in subsets of taste receptor cells of the tongue and palate epithelium and exclusively in gustducin-positive cells. Expressed in 15% taste bud cells in circumvallate and foliate papillae but only in 2% in fungiform papillae.

It localises to the membrane. The protein resides in the cell projection. The protein localises to the cilium membrane. Functionally, gustducin-coupled receptor for denatonium and N(6)-propyl-2-thiouracil implicated in the perception of bitter compounds in the oral cavity and the gastrointestinal tract. Signals through PLCB2 and the calcium-regulated cation channel TRPM5. In airway epithelial cells, binding of denatonium increases the intracellular calcium ion concentration and stimulates ciliary beat frequency. The protein is Taste receptor type 2 member 4 (Tas2r4) of Mus musculus (Mouse).